The chain runs to 444 residues: IMP-specific 5'-nucleotidase 1 (444 aa).

Positions 132 and 150 each coordinate ATP. Aspartate 170 functions as the Nucleophile in the catalytic mechanism. IMP is bound by residues aspartate 170, aspartate 172, aspartate 178, threonine 204, serine 207, serine 308, aspartate 363, and lysine 371. Residues aspartate 170 and aspartate 172 each contribute to the Mg(2+) site. Aspartate 172 functions as the Proton donor in the catalytic mechanism. Aspartate 394 lines the Mg(2+) pocket.

The protein belongs to the ISN1 family. In terms of assembly, homotetramer. Mg(2+) is required as a cofactor.

The protein resides in the cytoplasm. It carries out the reaction IMP + H2O = inosine + phosphate. At physiological pH, allosterically activated by ATP. ATP binding is a prerequisite to magnesium and substrate binding. ATP binds to 2 of the subunits in the homotetramer inducing a closure of these 2 subunits and the release of the C-terminal loop, thereby activating the enzyme. In this conformation, the enzyme can bind IMP and magnesium which ultimately leads to the release of ATP. At pH 5, ATP does not have an allosteric role and is dispensable for magnesium and substrate binding. Inhibited by phosphocholine and D-myo-inositol-4-phosphate. In terms of biological role, specifically, catalyzes the dephosphorylation of inosine monophosphate (IMP) into inosine. By dephosphorylating IMP, plays a role in the purine salvage pathway. Does not have phosphotransferase activity with IMP as phosphate donor and adenosine as phosphate acceptor. The polypeptide is IMP-specific 5'-nucleotidase 1 (Plasmodium falciparum (isolate 3D7)).